An 80-amino-acid chain; its full sequence is Small ribosomal subunit protein bS16 (80 aa).

It belongs to the bacterial ribosomal protein bS16 family.

This Nitrosococcus oceani (strain ATCC 19707 / BCRC 17464 / JCM 30415 / NCIMB 11848 / C-107) protein is Small ribosomal subunit protein bS16.